Reading from the N-terminus, the 141-residue chain is Large ribosomal subunit protein uL11 (141 aa).

This sequence belongs to the universal ribosomal protein uL11 family. In terms of assembly, part of the ribosomal stalk of the 50S ribosomal subunit. Interacts with L10 and the large rRNA to form the base of the stalk. L10 forms an elongated spine to which L12 dimers bind in a sequential fashion forming a multimeric L10(L12)X complex. One or more lysine residues are methylated.

Functionally, forms part of the ribosomal stalk which helps the ribosome interact with GTP-bound translation factors. This chain is Large ribosomal subunit protein uL11, found in Oceanobacillus iheyensis (strain DSM 14371 / CIP 107618 / JCM 11309 / KCTC 3954 / HTE831).